A 186-amino-acid chain; its full sequence is Ribosome-recycling factor (186 aa).

Belongs to the RRF family.

It localises to the cytoplasm. Responsible for the release of ribosomes from messenger RNA at the termination of protein biosynthesis. May increase the efficiency of translation by recycling ribosomes from one round of translation to another. The sequence is that of Ribosome-recycling factor from Methylocella silvestris (strain DSM 15510 / CIP 108128 / LMG 27833 / NCIMB 13906 / BL2).